The primary structure comprises 314 residues: 3'-5' exoribonuclease YhaM (314 aa).

Residues 163-279 (HVVSMLHLAK…LHYIDNLDAK (117 aa)) enclose the HD domain.

It belongs to the YhaM family.

Its function is as follows. Shows a 3'-5' exoribonuclease activity. In Bacillus pumilus (strain SAFR-032), this protein is 3'-5' exoribonuclease YhaM.